Consider the following 391-residue polypeptide: Thioredoxin-interacting protein (391 aa).

Residue lysine 212 forms a Glycyl lysine isopeptide (Lys-Gly) (interchain with G-Cter in ubiquitin) linkage. Phosphoserine is present on serine 361.

It belongs to the arrestin family. In terms of assembly, homodimer; disulfide-linked. Interacts with TXN/thioredoxin through its redox-active site. Interacts with transcriptional repressors ZBTB16, ZBTB32 and HDAC1. Interacts with DDIT4. Post-translationally, ubiquitinated; undergoes heterotypic 'Lys-48'-/'Lys-63'-branched polyubiquitination catalyzed by ITCH and UBR5 resulting in proteasomal degradation. Deubiquitinated by USP5, leading to TXNIP stabilization.

The protein localises to the cytoplasm. In terms of biological role, may act as an oxidative stress mediator by inhibiting thioredoxin activity or by limiting its bioavailability. Interacts with COPS5 and restores COPS5-induced suppression of CDKN1B stability, blocking the COPS5-mediated translocation of CDKN1B from the nucleus to the cytoplasm. Functions as a transcriptional repressor, possibly by acting as a bridge molecule between transcription factors and corepressor complexes, and over-expression will induce G0/G1 cell cycle arrest. Required for the maturation of natural killer cells. Acts as a suppressor of tumor cell growth. Inhibits the proteasomal degradation of DDIT4, and thereby contributes to the inhibition of the mammalian target of rapamycin complex 1 (mTORC1). The sequence is that of Thioredoxin-interacting protein (TXNIP) from Sus scrofa (Pig).